The primary structure comprises 198 residues: Threonylcarbamoyl-AMP synthase (198 aa).

Positions 15 to 198 constitute a YrdC-like domain; that stretch reads LLKIYHIIKL…AISGQLIRRG (184 aa).

The protein belongs to the SUA5 family. TsaC subfamily.

It localises to the cytoplasm. The catalysed reaction is L-threonine + hydrogencarbonate + ATP = L-threonylcarbamoyladenylate + diphosphate + H2O. Its function is as follows. Required for the formation of a threonylcarbamoyl group on adenosine at position 37 (t(6)A37) in tRNAs that read codons beginning with adenine. Catalyzes the conversion of L-threonine, HCO(3)(-)/CO(2) and ATP to give threonylcarbamoyl-AMP (TC-AMP) as the acyladenylate intermediate, with the release of diphosphate. This Baumannia cicadellinicola subsp. Homalodisca coagulata protein is Threonylcarbamoyl-AMP synthase.